A 494-amino-acid polypeptide reads, in one-letter code: Protein nucleotidyltransferase YdiU (494 aa).

8 residues coordinate ATP: Gly-90, Gly-92, Arg-93, Lys-113, Asp-125, Gly-126, Arg-176, and Arg-183. Catalysis depends on Asp-252, which acts as the Proton acceptor. Asn-253 and Asp-262 together coordinate Mg(2+). Asp-262 is a binding site for ATP.

It belongs to the SELO family. Mg(2+) serves as cofactor. Mn(2+) is required as a cofactor.

The enzyme catalyses L-seryl-[protein] + ATP = 3-O-(5'-adenylyl)-L-seryl-[protein] + diphosphate. It carries out the reaction L-threonyl-[protein] + ATP = 3-O-(5'-adenylyl)-L-threonyl-[protein] + diphosphate. The catalysed reaction is L-tyrosyl-[protein] + ATP = O-(5'-adenylyl)-L-tyrosyl-[protein] + diphosphate. It catalyses the reaction L-histidyl-[protein] + UTP = N(tele)-(5'-uridylyl)-L-histidyl-[protein] + diphosphate. The enzyme catalyses L-seryl-[protein] + UTP = O-(5'-uridylyl)-L-seryl-[protein] + diphosphate. It carries out the reaction L-tyrosyl-[protein] + UTP = O-(5'-uridylyl)-L-tyrosyl-[protein] + diphosphate. Nucleotidyltransferase involved in the post-translational modification of proteins. It can catalyze the addition of adenosine monophosphate (AMP) or uridine monophosphate (UMP) to a protein, resulting in modifications known as AMPylation and UMPylation. In Alkalilimnicola ehrlichii (strain ATCC BAA-1101 / DSM 17681 / MLHE-1), this protein is Protein nucleotidyltransferase YdiU.